The chain runs to 401 residues: Protein zntC (401 aa).

Helical transmembrane passes span 33-53 (GGLIAGIFVLTLTASFVPWFL), 61-81 (LVSVVSILTCLSAGVIIGAGF), and 114-134 (ITIVTMFALICVDKILVSGGL). Residues 141–247 (NHMDLSQHNH…SHKDEKDSEK (107 aa)) are disordered. Positions 167 to 184 (GDDDDDDVNEDQEEDSTK) are enriched in acidic residues. Over residues 200-209 (HNSSNSSSNG) the composition is skewed to low complexity. Residues 212-225 (HGLKKKKKSKKEHG) are compositionally biased toward basic residues. A compositionally biased stretch (basic and acidic residues) spans 226–247 (HGHNHDHSSNGHSHKDEKDSEK). The next 5 membrane-spanning stretches (helical) occupy residues 256-276 (AWVFLVALSLHSIFDGLGLGS), 285-305 (GLLIAVLAHKFLDGLVLGIAI), 316-336 (CIALVFAAAMTPLGIGIGMAI), 351-371 (GIILSITCGSFIYISLIELLP), and 381-401 (KLKLAVAFLGYSVMAILALWV).

Belongs to the ZIP transporter (TC 2.A.5) family.

The protein localises to the membrane. May transport divalent cations. May participate, with dstA, in the regulation of the differentiation of stalk cells during development. The sequence is that of Protein zntC (zntC) from Dictyostelium discoideum (Social amoeba).